A 440-amino-acid chain; its full sequence is Transposon Ty1-PR3 Gag polyprotein (440 aa).

Polar residues-rich tracts occupy residues 1–23 (MESQ…SVTS), 48–60 (TKAN…TPAS), and 127–152 (QSQF…GNTF). Disordered stretches follow at residues 1-93 (MESQ…MMTQ), 126-173 (PQSQ…RPPP), and 352-440 (GSRN…PGTY). The span at 153–165 (TDSSSADSDMTST) shows a compositional bias: low complexity. The interval 299–401 (NNGIHINNKV…NSKSKTARAH (103 aa)) is RNA-binding. Residues 402–418 (NVSTSNNSPSTDNDSIS) are compositionally biased toward low complexity. Ser-416 is subject to Phosphoserine. Residues 419-428 (KSTTEPIQLN) are compositionally biased toward polar residues. The segment covering 429–440 (NKHDLHLRPGTY) has biased composition (basic and acidic residues).

In terms of assembly, homotrimer.

The protein localises to the cytoplasm. In terms of biological role, capsid protein (CA) is the structural component of the virus-like particle (VLP), forming the shell that encapsulates the retrotransposons dimeric RNA genome. The particles are assembled from trimer-clustered units and there are holes in the capsid shells that allow for the diffusion of macromolecules. CA also has nucleocapsid-like chaperone activity, promoting primer tRNA(i)-Met annealing to the multipartite primer-binding site (PBS), dimerization of Ty1 RNA and initiation of reverse transcription. This chain is Transposon Ty1-PR3 Gag polyprotein (TY1A-PR3), found in Saccharomyces cerevisiae (strain ATCC 204508 / S288c) (Baker's yeast).